A 314-amino-acid polypeptide reads, in one-letter code: Ribosomal RNA small subunit methyltransferase H (314 aa).

Residues 36–38 (GGH), Asp-56, Phe-82, Asp-104, and Gln-111 each bind S-adenosyl-L-methionine.

This sequence belongs to the methyltransferase superfamily. RsmH family.

It is found in the cytoplasm. The enzyme catalyses cytidine(1402) in 16S rRNA + S-adenosyl-L-methionine = N(4)-methylcytidine(1402) in 16S rRNA + S-adenosyl-L-homocysteine + H(+). Specifically methylates the N4 position of cytidine in position 1402 (C1402) of 16S rRNA. The sequence is that of Ribosomal RNA small subunit methyltransferase H from Ectopseudomonas mendocina (strain ymp) (Pseudomonas mendocina).